The chain runs to 106 residues: ATP-dependent Clp protease adapter protein ClpS (106 aa).

The protein belongs to the ClpS family. As to quaternary structure, binds to the N-terminal domain of the chaperone ClpA.

In terms of biological role, involved in the modulation of the specificity of the ClpAP-mediated ATP-dependent protein degradation. In Sodalis glossinidius (strain morsitans), this protein is ATP-dependent Clp protease adapter protein ClpS.